Consider the following 926-residue polypeptide: Transcriptional activator protein acu-15 (926 aa).

Positions 24–51 (CDRCRSKKIRCDGIRPCCSQCANVGFEC) form a DNA-binding region, zn(2)-C6 fungal-type. 3 disordered regions span residues 100–129 (KMHSNRSRSAEPPRSTPAAEIKRDSGTPAK), 602–649 (LPQS…SASL), and 667–801 (TPQH…TSTG). Residues 119 to 129 (EIKRDSGTPAK) show a composition bias toward basic and acidic residues. Low complexity-rich tracts occupy residues 623 to 632 (AQQGSPSPSA) and 669 to 681 (QHQQYQHQQLQQQ). 2 stretches are compositionally biased toward polar residues: residues 689-703 (ARSQTSFDNLRQKAQ) and 726-736 (RTSTGTQSTPN). Low complexity predominate over residues 740-792 (LSLSSPQSPVSPVQMRSQPHQLQQQQQQQPQPQQQQQQHQRSSIASSHSQQGQ).

Its subcellular location is the nucleus. Positive regulator of acetate induction. The protein is Transcriptional activator protein acu-15 (acu-15) of Neurospora crassa (strain ATCC 24698 / 74-OR23-1A / CBS 708.71 / DSM 1257 / FGSC 987).